Here is a 310-residue protein sequence, read N- to C-terminus: Phosphoribosylaminoimidazole-succinocarboxamide synthase (310 aa).

Belongs to the SAICAR synthetase family.

The enzyme catalyses 5-amino-1-(5-phospho-D-ribosyl)imidazole-4-carboxylate + L-aspartate + ATP = (2S)-2-[5-amino-1-(5-phospho-beta-D-ribosyl)imidazole-4-carboxamido]succinate + ADP + phosphate + 2 H(+). It functions in the pathway purine metabolism; IMP biosynthesis via de novo pathway; 5-amino-1-(5-phospho-D-ribosyl)imidazole-4-carboxamide from 5-amino-1-(5-phospho-D-ribosyl)imidazole-4-carboxylate: step 1/2. The chain is Phosphoribosylaminoimidazole-succinocarboxamide synthase from Xanthomonas campestris pv. campestris (strain B100).